The sequence spans 302 residues: Aspartate carbamoyltransferase catalytic subunit (302 aa).

2 residues coordinate carbamoyl phosphate: R53 and T54. K82 contacts L-aspartate. Residues R103, H131, and Q134 each contribute to the carbamoyl phosphate site. The L-aspartate site is built by R164 and R223. Carbamoyl phosphate contacts are provided by L260 and P261.

This sequence belongs to the aspartate/ornithine carbamoyltransferase superfamily. ATCase family. As to quaternary structure, heterooligomer of catalytic and regulatory chains.

It catalyses the reaction carbamoyl phosphate + L-aspartate = N-carbamoyl-L-aspartate + phosphate + H(+). The protein operates within pyrimidine metabolism; UMP biosynthesis via de novo pathway; (S)-dihydroorotate from bicarbonate: step 2/3. Catalyzes the condensation of carbamoyl phosphate and aspartate to form carbamoyl aspartate and inorganic phosphate, the committed step in the de novo pyrimidine nucleotide biosynthesis pathway. This Methanococcus maripaludis (strain DSM 14266 / JCM 13030 / NBRC 101832 / S2 / LL) protein is Aspartate carbamoyltransferase catalytic subunit.